The sequence spans 377 residues: N5-carboxyaminoimidazole ribonucleotide synthase (377 aa).

Residues Arg93, Lys133, 138 to 144, 175 to 178, Glu183, His206, and 257 to 258 each bind ATP; these read GYDGKGQ, EEFV, and NE. The ATP-grasp domain occupies 97-287; sequence KALLDNAGVR…QFENHLRAVC (191 aa).

This sequence belongs to the PurK/PurT family. In terms of assembly, homodimer.

It carries out the reaction 5-amino-1-(5-phospho-beta-D-ribosyl)imidazole + hydrogencarbonate + ATP = 5-carboxyamino-1-(5-phospho-D-ribosyl)imidazole + ADP + phosphate + 2 H(+). It participates in purine metabolism; IMP biosynthesis via de novo pathway; 5-amino-1-(5-phospho-D-ribosyl)imidazole-4-carboxylate from 5-amino-1-(5-phospho-D-ribosyl)imidazole (N5-CAIR route): step 1/2. Functionally, catalyzes the ATP-dependent conversion of 5-aminoimidazole ribonucleotide (AIR) and HCO(3)(-) to N5-carboxyaminoimidazole ribonucleotide (N5-CAIR). In Vibrio parahaemolyticus serotype O3:K6 (strain RIMD 2210633), this protein is N5-carboxyaminoimidazole ribonucleotide synthase.